The following is a 487-amino-acid chain: UL37 immediate early glycoprotein (487 aa).

An N-terminal signal peptide occupies residues 1 to 22 (MSPVYVNLLGSVGLLAFWYFSY). Positions 83 to 107 (GEESVTEDTEREDTEEEREDEEEEN) are enriched in acidic residues. Positions 83-121 (GEESVTEDTEREDTEEEREDEEEENEARTPEVNPIDAEG) are disordered. Asn206, Asn210, Asn219, Asn223, Asn242, Asn246, Asn275, Asn281, Asn294, Asn297, Asn306, Asn333, Asn337, Asn343, Asn379, Asn384, and Asn391 each carry an N-linked (GlcNAc...) asparagine; by host glycan. A helical transmembrane segment spans residues 433 to 459 (WALLSICTVAAGSIALLSLFCILLIGL).

The protein belongs to the immediate early glycoprotein family. Interacts with host BAX. Interacts with host RSAD2/viperin; this interaction results in RSAD2/viperin relocalization from the endoplasmic reticulum to the mitochondria, actin cytoskeleton disruption and enhancement of infection. Interacts with host PEX19; this interaction inhibits the peroxisomal-dependent antiviral signaling. Interacts with host CHCHD6; this interaction rewires mitochondria by engaging the conserved MICOS complex.

The protein resides in the host endoplasmic reticulum membrane. It localises to the host Golgi apparatus membrane. Its subcellular location is the host mitochondrion membrane. It is found in the host peroxisome. Its function is as follows. Multifunctional transmembrane protein that plays several key roles in viral replication. Rapidely traffics from the host endoplasmic reticulum to the outer mitochondrial membrane where it acts to inhibit host immune response, block apoptotic signaling, regulate calcium flux, and induce mitochondrial fragmentation. Sequesters proapoptotic BAX at the outer mitochondrial membrane and prevents cytochrome c release and subsequent initiation of the proapoptotic cascade. Also provoques a calcium efflux from host endoplasmic reticulum and F-actin cytoskeleton disruption. Participates in the increase of host mitochondrial biogenesis, thus promoting viral replication by efficient use of newly made mitochondria. Additionally, a subset of vMIA localizes to peroxisomes, causing fragmentation and blocking peroxisomal MAVS signaling. Mechanistically, inhibits host MAVS oligomerization at peroxisomes in a mitochondrial fission factors (MFF)-dependent manner and in mitochondria independently of mitochondrial fission factors. Plays an essential role in the trafficking of host viperin/RSAD2 from the endoplasmic reticulum to the viral assembly compartment via the mitochondria during viral infection as failure of viperin to localize to the mitochondria results in insufficient lipogenesis and thus reduces viral replication. Functionally, may play a role in escape from the host antiviral response. The chain is UL37 immediate early glycoprotein (UL37) from Human cytomegalovirus (strain AD169) (HHV-5).